A 184-amino-acid polypeptide reads, in one-letter code: ATP synthase subunit b, chloroplastic (184 aa).

A helical membrane pass occupies residues 27 to 49; that stretch reads LATNLINLSVVLGVLIFFGKGVL.

It belongs to the ATPase B chain family. F-type ATPases have 2 components, F(1) - the catalytic core - and F(0) - the membrane proton channel. F(1) has five subunits: alpha(3), beta(3), gamma(1), delta(1), epsilon(1). F(0) has four main subunits: a(1), b(1), b'(1) and c(10-14). The alpha and beta chains form an alternating ring which encloses part of the gamma chain. F(1) is attached to F(0) by a central stalk formed by the gamma and epsilon chains, while a peripheral stalk is formed by the delta, b and b' chains.

It localises to the plastid. The protein localises to the chloroplast thylakoid membrane. Its function is as follows. F(1)F(0) ATP synthase produces ATP from ADP in the presence of a proton or sodium gradient. F-type ATPases consist of two structural domains, F(1) containing the extramembraneous catalytic core and F(0) containing the membrane proton channel, linked together by a central stalk and a peripheral stalk. During catalysis, ATP synthesis in the catalytic domain of F(1) is coupled via a rotary mechanism of the central stalk subunits to proton translocation. Component of the F(0) channel, it forms part of the peripheral stalk, linking F(1) to F(0). This is ATP synthase subunit b, chloroplastic from Guizotia abyssinica (Niger).